Here is a 417-residue protein sequence, read N- to C-terminus: 3-isopropylmalate dehydratase large subunit (417 aa).

The [4Fe-4S] cluster site is built by Cys-298, Cys-358, and Cys-361.

This sequence belongs to the aconitase/IPM isomerase family. LeuC type 2 subfamily. As to quaternary structure, heterodimer of LeuC and LeuD. [4Fe-4S] cluster is required as a cofactor.

The catalysed reaction is (2R,3S)-3-isopropylmalate = (2S)-2-isopropylmalate. The protein operates within amino-acid biosynthesis; L-leucine biosynthesis; L-leucine from 3-methyl-2-oxobutanoate: step 2/4. In terms of biological role, catalyzes the isomerization between 2-isopropylmalate and 3-isopropylmalate, via the formation of 2-isopropylmaleate. This chain is 3-isopropylmalate dehydratase large subunit, found in Thermoanaerobacter pseudethanolicus (strain ATCC 33223 / 39E) (Clostridium thermohydrosulfuricum).